Consider the following 386-residue polypeptide: mRNA-capping enzyme subunit beta (386 aa).

The interval 1–137 is disordered; the sequence is MDIGKMINDD…TTTITGCPPS (137 aa). 2 stretches are compositionally biased toward polar residues: residues 20 to 32 and 41 to 56; these read VKSL…TGLP and KASS…TNEM. A compositionally biased stretch (acidic residues) spans 57 to 67; the sequence is ESGEDDDDEDA. The segment covering 93–115 has biased composition (basic and acidic residues); sequence RHAERDHRPPPHRQDRRDPRMER.

It belongs to the fungal TPase family. Heterodimer. The mRNA-capping enzyme is composed of two separate chains alpha and beta, respectively a mRNA guanylyltransferase and an mRNA 5'-triphosphate monophosphatase. Mg(2+) serves as cofactor.

Its subcellular location is the nucleus. The catalysed reaction is a 5'-end triphospho-ribonucleoside in mRNA + H2O = a 5'-end diphospho-ribonucleoside in mRNA + phosphate + H(+). Functionally, first step of mRNA capping. Converts the 5'-triphosphate end of a nascent mRNA chain into a diphosphate end. The polypeptide is mRNA-capping enzyme subunit beta (CET1) (Yarrowia lipolytica (strain CLIB 122 / E 150) (Yeast)).